The primary structure comprises 504 residues: Maturase K (504 aa).

The protein belongs to the intron maturase 2 family. MatK subfamily.

It localises to the plastid. The protein resides in the chloroplast. Its function is as follows. Usually encoded in the trnK tRNA gene intron. Probably assists in splicing its own and other chloroplast group II introns. The chain is Maturase K from Aucuba japonica (Japanese laurel).